A 700-amino-acid chain; its full sequence is Elongation factor G (700 aa).

The tr-type G domain maps to 13 to 288; sequence SKIRNIGITA…AVIDYLPAPD (276 aa). GTP is bound by residues 22–29, 86–90, and 140–143; these read AHIDAGKT, DTPGH, and NKLD.

It belongs to the TRAFAC class translation factor GTPase superfamily. Classic translation factor GTPase family. EF-G/EF-2 subfamily.

It localises to the cytoplasm. Functionally, catalyzes the GTP-dependent ribosomal translocation step during translation elongation. During this step, the ribosome changes from the pre-translocational (PRE) to the post-translocational (POST) state as the newly formed A-site-bound peptidyl-tRNA and P-site-bound deacylated tRNA move to the P and E sites, respectively. Catalyzes the coordinated movement of the two tRNA molecules, the mRNA and conformational changes in the ribosome. In Gluconobacter oxydans (strain 621H) (Gluconobacter suboxydans), this protein is Elongation factor G.